Consider the following 471-residue polypeptide: Tyrosine--tRNA ligase, mitochondrial (471 aa).

L-tyrosine is bound at residue Tyr71. Residue Asp75 coordinates ATP. Residues 76-85 (PTGDSLHVGH) carry the 'HIGH' region motif. L-tyrosine is bound by residues Asp115, Tyr215, Gln219, Asp222, and Gln241. 2 residues coordinate ATP: Ile268 and Lys278. The 'KMSKS' region signature appears at 275-279 (KLGKS). Lys349 and Lys361 each carry N6-acetyllysine.

Belongs to the class-I aminoacyl-tRNA synthetase family. As to quaternary structure, homodimer.

Its subcellular location is the mitochondrion matrix. The catalysed reaction is tRNA(Tyr) + L-tyrosine + ATP = L-tyrosyl-tRNA(Tyr) + AMP + diphosphate + H(+). Functionally, catalyzes the attachment of tyrosine to tRNA(Tyr) in a two-step reaction: tyrosine is first activated by ATP to form Tyr-AMP and then transferred to the acceptor end of tRNA(Tyr). The chain is Tyrosine--tRNA ligase, mitochondrial (Yars2) from Rattus norvegicus (Rat).